The following is a 1086-amino-acid chain: WD repeat-containing protein 64 (1086 aa).

WD repeat units follow at residues 129 to 168 (RRRD…WITG), 170 to 199 (DYLG…SSQE), 321 to 360 (AMPR…KPVG), 364 to 403 (GHMF…VLQV), 411 to 448 (PGDM…QDTK), 453 to 492 (THER…QIYQ), 498 to 537 (GLSI…EMKM), 560 to 602 (QVKQ…PYLQ), and 642 to 683 (IVDV…VKEI). Residues 724–749 (ICSSTQCDSSKGPQSSKGSKQSIHDA) are disordered. A compositionally biased stretch (low complexity) spans 732–744 (SSKGPQSSKGSKQ). WD repeat units lie at residues 765 to 806 (ASRK…KDML), 809 to 850 (TKHS…DPPH), and 863 to 902 (AHSL…YCGY). The disordered stretch occupies residues 1047 to 1069 (DKVKREEAPEMTEGSRRKSLKRN). A compositionally biased stretch (basic and acidic residues) spans 1049-1062 (VKREEAPEMTEGSR).

The protein is WD repeat-containing protein 64 (Wdr64) of Mus musculus (Mouse).